A 194-amino-acid polypeptide reads, in one-letter code: Nucleoside triphosphate pyrophosphatase (194 aa).

The Proton acceptor role is filled by Asp-68.

The protein belongs to the Maf family. A divalent metal cation is required as a cofactor.

It localises to the cytoplasm. The catalysed reaction is a ribonucleoside 5'-triphosphate + H2O = a ribonucleoside 5'-phosphate + diphosphate + H(+). The enzyme catalyses a 2'-deoxyribonucleoside 5'-triphosphate + H2O = a 2'-deoxyribonucleoside 5'-phosphate + diphosphate + H(+). Nucleoside triphosphate pyrophosphatase. May have a dual role in cell division arrest and in preventing the incorporation of modified nucleotides into cellular nucleic acids. The polypeptide is Nucleoside triphosphate pyrophosphatase (Corynebacterium jeikeium (strain K411)).